A 956-amino-acid polypeptide reads, in one-letter code: Glycine dehydrogenase (decarboxylating) (956 aa).

K697 is modified (N6-(pyridoxal phosphate)lysine).

Belongs to the GcvP family. As to quaternary structure, the glycine cleavage system is composed of four proteins: P, T, L and H. Requires pyridoxal 5'-phosphate as cofactor.

The enzyme catalyses N(6)-[(R)-lipoyl]-L-lysyl-[glycine-cleavage complex H protein] + glycine + H(+) = N(6)-[(R)-S(8)-aminomethyldihydrolipoyl]-L-lysyl-[glycine-cleavage complex H protein] + CO2. The glycine cleavage system catalyzes the degradation of glycine. The P protein binds the alpha-amino group of glycine through its pyridoxal phosphate cofactor; CO(2) is released and the remaining methylamine moiety is then transferred to the lipoamide cofactor of the H protein. This is Glycine dehydrogenase (decarboxylating) from Cereibacter sphaeroides (strain KD131 / KCTC 12085) (Rhodobacter sphaeroides).